Reading from the N-terminus, the 382-residue chain is LIM homeobox transcription factor 1-alpha (382 aa).

2 LIM zinc-binding domains span residues 33–92 and 92–154; these read SVCE…LFAV and VKCG…EREL. Disordered regions lie at residues 161–208 and 252–285; these read AASD…QQRR and KLARRQQQQQQDQQNTQRLSSAQTNGGGSAGMEG. Residues 195 to 254 constitute a DNA-binding region (homeobox); the sequence is PKRPRTILTTQQRRAFKASFEVSSKPCRKVRETLAAETGLSVRVVQVWFQNQRAKMKKLA. The span at 256–269 shows a compositional bias: low complexity; it reads RQQQQQQDQQNTQR.

Isoform 1 is expressed in many tissues. Not found in heart, liver, spleen and testis. Relatively highly expressed in fetal brain. Isoform LMX1A-4AB is expressed in testis.

It is found in the nucleus. Functionally, acts as a transcriptional activator by binding to an A/T-rich sequence, the FLAT element, in the insulin gene promoter. Required for development of the roof plate and, in turn, for specification of dorsal cell fates in the CNS and developing vertebrae. The protein is LIM homeobox transcription factor 1-alpha (LMX1A) of Homo sapiens (Human).